The sequence spans 361 residues: 5-formaminoimidazole-4-carboxamide-1-(beta)-D-ribofuranosyl 5'-monophosphate synthetase (361 aa).

Residues H27 and S94 each contribute to the 5-amino-1-(5-phospho-beta-D-ribosyl)imidazole-4-carboxamide site. Residues 116–348 (RAILRWEAER…MGQRIAKEIK (233 aa)) form the ATP-grasp domain. ATP-binding positions include 146–208 (PDDI…ANYC) and E230. N258 is a 5-amino-1-(5-phospho-beta-D-ribosyl)imidazole-4-carboxamide binding site. Mg(2+) is bound by residues Q297 and E310.

The protein belongs to the phosphohexose mutase family. Mg(2+) is required as a cofactor. Requires Mn(2+) as cofactor.

It carries out the reaction 5-amino-1-(5-phospho-beta-D-ribosyl)imidazole-4-carboxamide + formate + ATP = 5-formamido-1-(5-phospho-D-ribosyl)imidazole-4-carboxamide + ADP + phosphate. It participates in purine metabolism; IMP biosynthesis via de novo pathway; 5-formamido-1-(5-phospho-D-ribosyl)imidazole-4-carboxamide from 5-amino-1-(5-phospho-D-ribosyl)imidazole-4-carboxamide (formate route): step 1/1. Catalyzes the ATP- and formate-dependent formylation of 5-aminoimidazole-4-carboxamide-1-beta-d-ribofuranosyl 5'-monophosphate (AICAR) to 5-formaminoimidazole-4-carboxamide-1-beta-d-ribofuranosyl 5'-monophosphate (FAICAR) in the absence of folates. This chain is 5-formaminoimidazole-4-carboxamide-1-(beta)-D-ribofuranosyl 5'-monophosphate synthetase, found in Methanococcus maripaludis (strain C5 / ATCC BAA-1333).